Here is a 349-residue protein sequence, read N- to C-terminus: MDALMNFGTGIFGGAWPAVWTLIKIVLIVAPMMLGVAYLTYFERKVIGYMQVRIGPNRVGPWGLIQPIADGLKLLMKEIIVPSGANKGIFIIAPMLAIAPALAAWAVVPFTDSLVLANIDASLLYIMAITSMGVYGIILSGWASNSKYAFLGAMRSAAQMVSYEISMGFSLICVLMVSNSLNLVEIVNVQNQGRFAGWGLSFLSWNWLPLFPMFLVYLISGVAETNRAPFDVAEGESEIVAGFHVEYSGMAFAVFFLAEYANMILVSALTSIMFLGGWLSPVSFLPDGILWLFAKMSAILFLFLWFRATFPRYRYDQLMRLGWKVFVPICLIWLVVVGVWMMSPLNIWK.

A run of 8 helical transmembrane segments spans residues 20–42 (WTLI…LTYF), 88–108 (GIFI…WAVV), 123–143 (LLYI…SGWA), 167–187 (MGFS…VEIV), 202–222 (FLSW…ISGV), 249–269 (GMAF…VSAL), 284–304 (FLPD…FLFL), and 325–345 (VFVP…MSPL).

Belongs to the complex I subunit 1 family. In terms of assembly, NDH-1 is composed of 14 different subunits. Subunits NuoA, H, J, K, L, M, N constitute the membrane sector of the complex.

The protein localises to the cell inner membrane. It catalyses the reaction a quinone + NADH + 5 H(+)(in) = a quinol + NAD(+) + 4 H(+)(out). Functionally, NDH-1 shuttles electrons from NADH, via FMN and iron-sulfur (Fe-S) centers, to quinones in the respiratory chain. The immediate electron acceptor for the enzyme in this species is believed to be ubiquinone. Couples the redox reaction to proton translocation (for every two electrons transferred, four hydrogen ions are translocated across the cytoplasmic membrane), and thus conserves the redox energy in a proton gradient. This subunit may bind ubiquinone. The chain is NADH-quinone oxidoreductase subunit H from Dechloromonas aromatica (strain RCB).